The following is a 421-amino-acid chain: Gamma-glutamyl phosphate reductase (421 aa).

Belongs to the gamma-glutamyl phosphate reductase family.

The protein resides in the cytoplasm. It carries out the reaction L-glutamate 5-semialdehyde + phosphate + NADP(+) = L-glutamyl 5-phosphate + NADPH + H(+). It participates in amino-acid biosynthesis; L-proline biosynthesis; L-glutamate 5-semialdehyde from L-glutamate: step 2/2. Its function is as follows. Catalyzes the NADPH-dependent reduction of L-glutamate 5-phosphate into L-glutamate 5-semialdehyde and phosphate. The product spontaneously undergoes cyclization to form 1-pyrroline-5-carboxylate. In Ruegeria sp. (strain TM1040) (Silicibacter sp.), this protein is Gamma-glutamyl phosphate reductase.